A 172-amino-acid chain; its full sequence is RNA silencing suppressor p19 (172 aa).

The span at 1–20 (MERAIQGNDAREQANSERWD) shows a compositional bias: basic and acidic residues. Positions 1-38 (MERAIQGNDAREQANSERWDGGSGSSTSPFQLPDESPS) are disordered.

This sequence belongs to the tombusvirus protein p19 family. As to quaternary structure, homodimer.

Its function is as follows. Viral suppressor of RNA silencing which binds specifically to silencing RNAs (siRNAs). Acts as a molecular caliper to specifically select siRNAs based on the length of the duplex region of the RNA. This Tomato bushy stunt virus (strain type) (TBSV) protein is RNA silencing suppressor p19.